We begin with the raw amino-acid sequence, 503 residues long: Maturase K (503 aa).

Belongs to the intron maturase 2 family. MatK subfamily.

It localises to the plastid. The protein localises to the chloroplast. In terms of biological role, usually encoded in the trnK tRNA gene intron. Probably assists in splicing its own and other chloroplast group II introns. The polypeptide is Maturase K (Rosa acicularis (Prickly rose)).